Reading from the N-terminus, the 577-residue chain is 2-hydroxyacyl-CoA lyase (577 aa).

Glu-59 contacts thiamine diphosphate. Residues 412–493 are thiamine pyrophosphate binding; sequence TMDVGRAVLV…VIVFNNNGVY (82 aa). Mg(2+) contacts are provided by Asp-462 and Asn-489.

Belongs to the TPP enzyme family. As to quaternary structure, homotetramer. Mg(2+) serves as cofactor. It depends on thiamine diphosphate as a cofactor.

It carries out the reaction an (R)-2-hydroxy-long-chain-fatty acyl-CoA = a long-chain fatty aldehyde + formyl-CoA. The catalysed reaction is a 2-hydroxy-3-methyl fatty acyl-CoA = a 2-methyl-branched fatty aldehyde + formyl-CoA. Its function is as follows. Catalyzes a carbon-carbon cleavage reaction; cleaves a 2-hydroxy-3-methylacyl-CoA into formyl-CoA and a 2-methyl-branched fatty aldehyde. This is 2-hydroxyacyl-CoA lyase from Oryza sativa subsp. japonica (Rice).